Here is a 422-residue protein sequence, read N- to C-terminus: MAKTIQAIRGMNDCLPTQSPLWQKLEGAVKNVISAYGYNEMRMPIVEMTHLFSRAIGEVTDVVEKEMYTFEDRNGDSLTLRPEGTAGCVRAGIENGLLYNQEQRVWYMGPMFRHERPQKGRYRQFHQCGVEVFGLNGPDVDAELIMMTARLWRELGIDKHVRLELNSIGSLEARANYRTALIAFLEQHIDVLDEDCKRRMHTNPLRVLDTKNPDVQAILGDAPRLSDYLDPESTQHFAGLCELLDAAGIEYTVNERLVRGLDYYNRTVFEWITESLGSQGTVCGGGRYDGLVEQLGGKATPAVGFAMGLERLVLMLETLELTDVRRSVDVYVVTAGEGTMMAGMKLAEQVREAIPGVRVMNHFGGGNFKKQFKRADKVGAVVALVLGENEVADNTVVLKDLAGGEQVTYSQQEIASKIAELI.

It belongs to the class-II aminoacyl-tRNA synthetase family. In terms of assembly, homodimer.

The protein localises to the cytoplasm. It catalyses the reaction tRNA(His) + L-histidine + ATP = L-histidyl-tRNA(His) + AMP + diphosphate + H(+). This Vibrio vulnificus (strain CMCP6) protein is Histidine--tRNA ligase.